The following is a 290-amino-acid chain: DegV domain-containing protein MG450 (290 aa).

Positions Ile-3–Thr-289 constitute a DegV domain. Positions 65 and 97 each coordinate hexadecanoate.

In terms of biological role, may bind long-chain fatty acids, such as palmitate, and may play a role in lipid transport or fatty acid metabolism. This Mycoplasma genitalium (strain ATCC 33530 / DSM 19775 / NCTC 10195 / G37) (Mycoplasmoides genitalium) protein is DegV domain-containing protein MG450.